The sequence spans 321 residues: Bifunctional ligase/repressor BirA (321 aa).

The segment at residues 22–41 (GEQLGETLGMSRAAINKHIQ) is a DNA-binding region (H-T-H motif). The BPL/LPL catalytic domain occupies 67 to 254 (LNAKQILGQL…ELRAALELFE (188 aa)). Residues 89–91 (STN), Q112, 116–118 (RGR), and K183 each bind biotin.

The protein belongs to the biotin--protein ligase family. As to quaternary structure, monomer in solution. Interacts with BCCP. Homodimerizes to bind DNA. Interaction with the corepressor bio-5'-AMP increases dimerization.

The enzyme catalyses biotin + L-lysyl-[protein] + ATP = N(6)-biotinyl-L-lysyl-[protein] + AMP + diphosphate + H(+). With respect to regulation, the switch between the enzymatic activity and the repressor activity is regulated by cellular demand for biotin. The switch occurs by swapping of protein interaction partners by holoBirA. In conditions of high biotin demand, holoBirA associates with apoBCCP to transfer biotin. In conditions of low biotin demand, holoBirA dimerizes, binds DNA and represses transcription of the biotin operon. Acts both as a biotin--[acetyl-CoA-carboxylase] ligase and a biotin-operon repressor. In the presence of ATP, BirA activates biotin to form the BirA-biotinyl-5'-adenylate (BirA-bio-5'-AMP or holoBirA) complex. HoloBirA can either transfer the biotinyl moiety to the biotin carboxyl carrier protein (BCCP) subunit of acetyl-CoA carboxylase, or bind to the biotin operator site and inhibit transcription of the operon. The polypeptide is Bifunctional ligase/repressor BirA (Escherichia coli (strain K12)).